The following is a 421-amino-acid chain: MDEEQLRALLRDLDALKQRPDPAAIDRMRERVAGMVTPAAAARSKIKDMSSEVVDSNPYSRLMALQRMGIVDNYERIRDYSIAIVGIGGVGSVAAEMLTRCGIGRLLLYDYDTVELANMNRLFFRPDQVGMTKTDAAVQTLSGINPDVTLESYSLNITTVKGFETFLGSLKARSSDGRNTGVDLVLSCVDNYEARMVVNQACNELGQTWMESGVSEDAVSGHIQLLVPGETACFACAPPLVVASGVDERTLKREGVCAASLPTTMGVVAGLLVQNALKYLLKFGQVSPYLGYNSLKDYFPTMEMKPNPQCSNPACVQRQKEYMQSKPARDAAAKAKMEAEASAADECPVHLDNDWNISVVDDSDTVTPSILSTGADSLPEGLVRELPTADSYQEPVAPVTSGAIDDDLEELQRQLDALNSS.

Gly-89, Asp-110, Lys-133, Asn-156, and Asn-191 together coordinate ATP. Cys-233 and Cys-236 together coordinate Zn(2+). The active-site Glycyl thioester intermediate is the Cys-257. Residues Cys-310 and Cys-315 each coordinate Zn(2+).

It belongs to the ubiquitin-activating E1 family. UBA5 subfamily.

Functionally, E1-like enzyme which activates UFM1. The chain is Ubiquitin-like modifier-activating enzyme 5 from Oryza sativa subsp. japonica (Rice).